We begin with the raw amino-acid sequence, 221 residues long: Ribonuclease P protein subunit p29 (221 aa).

Phosphoserine is present on S10.

The protein belongs to the eukaryotic/archaeal RNase P protein component 1 family. As to quaternary structure, component of nuclear RNase P and RNase MRP ribonucleoproteins. RNase P consists of a catalytic RNA moiety and 10 different protein chains; POP1, POP4, POP5, POP7, RPP14, RPP21, RPP25, RPP30, RPP38 and RPP40. Within the RNase P complex, POP1, POP7 and RPP25 form the 'finger' subcomplex, POP5, RPP14, RPP40 and homodimeric RPP30 form the 'palm' subcomplex, and RPP21, POP4 and RPP38 form the 'wrist' subcomplex. All subunits of the RNase P complex interact with the catalytic RNA. Several subunits of RNase P are also part of the RNase MRP complex. RNase MRP consists of a catalytic RNA moiety and about 8 protein subunits; POP1, POP7, RPP25, RPP30, RPP38, RPP40 and possibly also POP4 and POP5.

It is found in the nucleus. Its subcellular location is the nucleolus. Functionally, component of ribonuclease P, a ribonucleoprotein complex that generates mature tRNA molecules by cleaving their 5'-ends. This is Ribonuclease P protein subunit p29 (Pop4) from Rattus norvegicus (Rat).